Consider the following 65-residue polypeptide: Large ribosomal subunit protein bL35 (65 aa).

It belongs to the bacterial ribosomal protein bL35 family.

The protein is Large ribosomal subunit protein bL35 of Agathobacter rectalis (strain ATCC 33656 / DSM 3377 / JCM 17463 / KCTC 5835 / VPI 0990) (Eubacterium rectale).